Consider the following 135-residue polypeptide: Probable histone H2A.2 (135 aa).

The protein belongs to the histone H2A family. As to quaternary structure, the nucleosome is a histone octamer containing two molecules each of H2A, H2B, H3 and H4 assembled in one H3-H4 heterotetramer and two H2A-H2B heterodimers. The octamer wraps approximately 147 bp of DNA.

It is found in the nucleus. The protein localises to the chromosome. Core component of nucleosome. Nucleosomes wrap and compact DNA into chromatin, limiting DNA accessibility to the cellular machineries which require DNA as a template. Histones thereby play a central role in transcription regulation, DNA repair, DNA replication and chromosomal stability. DNA accessibility is regulated via a complex set of post-translational modifications of histones, also called histone code, and nucleosome remodeling. The sequence is that of Probable histone H2A.2 from Oryza sativa subsp. indica (Rice).